Consider the following 98-residue polypeptide: Large ribosomal subunit protein uL23 (98 aa).

Belongs to the universal ribosomal protein uL23 family. As to quaternary structure, part of the 50S ribosomal subunit. Contacts protein L29, and trigger factor when it is bound to the ribosome.

In terms of biological role, one of the early assembly proteins it binds 23S rRNA. One of the proteins that surrounds the polypeptide exit tunnel on the outside of the ribosome. Forms the main docking site for trigger factor binding to the ribosome. This is Large ribosomal subunit protein uL23 from Limosilactobacillus reuteri (strain DSM 20016) (Lactobacillus reuteri).